A 293-amino-acid polypeptide reads, in one-letter code: Ribosomal protein L11 methyltransferase (293 aa).

Residues threonine 145, glycine 166, aspartate 188, and asparagine 230 each contribute to the S-adenosyl-L-methionine site.

This sequence belongs to the methyltransferase superfamily. PrmA family.

The protein resides in the cytoplasm. It catalyses the reaction L-lysyl-[protein] + 3 S-adenosyl-L-methionine = N(6),N(6),N(6)-trimethyl-L-lysyl-[protein] + 3 S-adenosyl-L-homocysteine + 3 H(+). Its function is as follows. Methylates ribosomal protein L11. The chain is Ribosomal protein L11 methyltransferase from Klebsiella pneumoniae subsp. pneumoniae (strain ATCC 700721 / MGH 78578).